A 286-amino-acid polypeptide reads, in one-letter code: Pyridoxal kinase PdxY (286 aa).

Residues serine 9 and 44-45 contribute to the substrate site; that span reads TQ. Residues aspartate 111, alanine 143, glutamate 148, lysine 181, and 208–211 contribute to the ATP site; that span reads RPLV. Aspartate 222 contributes to the substrate binding site.

This sequence belongs to the pyridoxine kinase family. PdxY subfamily. As to quaternary structure, homodimer. It depends on Mg(2+) as a cofactor.

The enzyme catalyses pyridoxal + ATP = pyridoxal 5'-phosphate + ADP + H(+). The protein operates within cofactor metabolism; pyridoxal 5'-phosphate salvage; pyridoxal 5'-phosphate from pyridoxal: step 1/1. In terms of biological role, pyridoxal kinase involved in the salvage pathway of pyridoxal 5'-phosphate (PLP). Catalyzes the phosphorylation of pyridoxal to PLP. This chain is Pyridoxal kinase PdxY, found in Pectobacterium atrosepticum (strain SCRI 1043 / ATCC BAA-672) (Erwinia carotovora subsp. atroseptica).